Reading from the N-terminus, the 417-residue chain is UDP-N-acetylglucosamine 1-carboxyvinyltransferase (417 aa).

22-23 is a phosphoenolpyruvate binding site; sequence KN. Residue R92 coordinates UDP-N-acetyl-alpha-D-glucosamine. C116 (proton donor) is an active-site residue. C116 is modified (2-(S-cysteinyl)pyruvic acid O-phosphothioketal). Positions 304 and 326 each coordinate UDP-N-acetyl-alpha-D-glucosamine.

It belongs to the EPSP synthase family. MurA subfamily.

It is found in the cytoplasm. The catalysed reaction is phosphoenolpyruvate + UDP-N-acetyl-alpha-D-glucosamine = UDP-N-acetyl-3-O-(1-carboxyvinyl)-alpha-D-glucosamine + phosphate. The protein operates within cell wall biogenesis; peptidoglycan biosynthesis. Cell wall formation. Adds enolpyruvyl to UDP-N-acetylglucosamine. In Desulfosudis oleivorans (strain DSM 6200 / JCM 39069 / Hxd3) (Desulfococcus oleovorans), this protein is UDP-N-acetylglucosamine 1-carboxyvinyltransferase.